Reading from the N-terminus, the 1312-residue chain is DNA repair protein RAD50.L (1312 aa).

ATP contacts are provided by arginine 13, asparagine 38, glycine 39, glycine 41, lysine 42, threonine 43, threonine 44, valine 67, aspartate 69, and glutamine 159. Position 43 (threonine 43) interacts with Mg(2+). Position 159 (glutamine 159) interacts with Mg(2+). 3 coiled-coil regions span residues 203–342 (VREY…LNRE), 415–558 (LREF…IKSR), and 587–628 (INQT…FEEK). Residues 635–734 (SQDFDSDLSR…RKDDMMELKP (100 aa)) form the Zinc-hook domain. The Zn(2+) site is built by cysteine 681 and cysteine 684. A coiled-coil region spans residues 712–1070 (LKSAEGELKR…ENKSESLKTN (359 aa)).

The protein belongs to the SMC family. RAD50 subfamily. In terms of assembly, component of the MRN complex composed of two heterodimers RAD50 and MRE11 associated with a single NBN. Requires Zn(2+) as cofactor.

It localises to the nucleus. The protein resides in the chromosome. Its subcellular location is the telomere. The enzyme catalyses ATP + H2O = ADP + phosphate + H(+). In terms of biological role, component of the MRN complex, which plays a central role in double-strand break (DSB) repair, DNA recombination, maintenance of telomere integrity and meiosis. The MRN complex is involved in the repair of DNA double-strand breaks (DSBs) via homologous recombination (HR), an error-free mechanism which primarily occurs during S and G2 phases. The complex (1) mediates the end resection of damaged DNA, which generates proper single-stranded DNA, a key initial steps in HR, and is (2) required for the recruitment of other repair factors and efficient activation of ATM and ATR upon DNA damage. The MRN complex possesses single-strand endonuclease activity and double-strand-specific 3'-5' exonuclease activity, which are provided by mre11, to initiate end resection, which is required for single-strand invasion and recombination. Within the complex, rad50 is both required to bind DNA ends and hold them in close proximity and regulate the activity of MRE11. Rad50 provides an ATP-dependent control of MRE11 by positioning DNA ends into the mre11 active site: ATP-binding induces a large structural change from an open form with accessible MRE11 nuclease sites into a closed form. The MRN complex is also required for DNA damage signaling via activation of the atm and atr kinases: the nuclease activity of mre11 is not required to activate ATM and ATR. The MRN complex promotes recruitment of topbp1 to DNA damage sites. The MRN complex and rbbp8/CtIP are also required for chromosome alignment during metaphase. The protein is DNA repair protein RAD50.L of Xenopus laevis (African clawed frog).